A 505-amino-acid polypeptide reads, in one-letter code: Lysine--tRNA ligase (505 aa).

Residues glutamate 415 and glutamate 422 each coordinate Mg(2+).

The protein belongs to the class-II aminoacyl-tRNA synthetase family. Homodimer. It depends on Mg(2+) as a cofactor.

It localises to the cytoplasm. The enzyme catalyses tRNA(Lys) + L-lysine + ATP = L-lysyl-tRNA(Lys) + AMP + diphosphate. The chain is Lysine--tRNA ligase from Pectobacterium carotovorum subsp. carotovorum (strain PC1).